The sequence spans 75 residues: Conotoxin Vc6a (75 aa).

Residues 1 to 22 form the signal peptide; the sequence is MKLTCVVIVAVLFLTANTFATA. The propeptide occupies 23–49; that stretch reads DDPRNGLENLFLKAHHEMNPEASKLNE. 3 disulfide bridges follow: Cys-51–Cys-66, Cys-58–Cys-69, and Cys-65–Cys-74.

Expressed by the venom duct.

Its subcellular location is the secreted. In Conus victoriae (Queen Victoria cone), this protein is Conotoxin Vc6a.